The primary structure comprises 555 residues: MKFRSDKVKKGIERAPHRALLRACGLSDEDFDKPLIGIANSYIDIIPGHVHLREFVEPIKEEVRKLGGVPIEFNVIGVDDGIAMGHEGMHYSLPSRELIADSIETVVNAHQLDALICIPNCDKIVPGMLMGALRVNVPTVFISGGPMLAGEVNGQKVDLISVFEGIGKVKRGEISEQELKVIEASACPTCGSCSGMFTANSMNCLTEVLGLALPGNGTILAIDPRREILARNAVKALFELLEKDVKPRDIVTEEALDDAFTVDIAMGGSSNTILHLLAIAREAGIEYNLAKINEISKRTPTICKISPASHYHIEDLDRVGGIPTIMKELSKLGLLHTERKTVSGKTIGEIISDAPDADGEVVRTIENPYSKDGGIAILFGNLAPEGAVVKTAGVDPKMLTFKGKAICFDSEEEAIEGILGGKVKPGHVVVIRYEGPKGGPGMREMLSPTSAIMGMGLGDKVALITDGRFSGGTRGACVGHISPEAAAGGPIGIVKDGDEILIDIPNRRIELLISEEEFNERMKNFKPKQKEIKSSWLRRYAKLVTSASKGAILEA.

Asp-80 provides a ligand contact to Mg(2+). Cys-121 contributes to the [2Fe-2S] cluster binding site. 2 residues coordinate Mg(2+): Asp-122 and Lys-123. The residue at position 123 (Lys-123) is an N6-carboxylysine. A [2Fe-2S] cluster-binding site is contributed by Cys-193. Mg(2+) is bound at residue Glu-444. Residue Ser-470 is the Proton acceptor of the active site.

The protein belongs to the IlvD/Edd family. In terms of assembly, homodimer. Requires [2Fe-2S] cluster as cofactor. Mg(2+) is required as a cofactor.

It carries out the reaction (2R)-2,3-dihydroxy-3-methylbutanoate = 3-methyl-2-oxobutanoate + H2O. It catalyses the reaction (2R,3R)-2,3-dihydroxy-3-methylpentanoate = (S)-3-methyl-2-oxopentanoate + H2O. The protein operates within amino-acid biosynthesis; L-isoleucine biosynthesis; L-isoleucine from 2-oxobutanoate: step 3/4. It functions in the pathway amino-acid biosynthesis; L-valine biosynthesis; L-valine from pyruvate: step 3/4. Functionally, functions in the biosynthesis of branched-chain amino acids. Catalyzes the dehydration of (2R,3R)-2,3-dihydroxy-3-methylpentanoate (2,3-dihydroxy-3-methylvalerate) into 2-oxo-3-methylpentanoate (2-oxo-3-methylvalerate) and of (2R)-2,3-dihydroxy-3-methylbutanoate (2,3-dihydroxyisovalerate) into 2-oxo-3-methylbutanoate (2-oxoisovalerate), the penultimate precursor to L-isoleucine and L-valine, respectively. This is Dihydroxy-acid dehydratase from Aquifex aeolicus (strain VF5).